The chain runs to 529 residues: ADP,ATP carrier protein 1 (529 aa).

A run of 12 helical transmembrane segments spans residues 24-44, 63-83, 93-113, 124-144, 149-169, 184-204, 220-240, 284-304, 322-342, 356-376, 381-401, and 463-483; these read LKKV…YTIL, IPFI…LIYA, ALFY…PLVI, DFAD…IAML, FAAF…LMFW, FYAL…PAIV, WGVT…IIAA, YMLL…LVEV, AFMG…MLFI, ALVT…LVIF, TGLV…VGAV, and ISAM…VWLT. Residues 509 to 520 are compositionally biased toward low complexity; the sequence is AAEKEASPAAKE. The interval 509–529 is disordered; it reads AAEKEASPAAKEVSPAIEGVS.

Belongs to the ADP/ATP translocase tlc family.

The protein localises to the cell membrane. In Chlamydia muridarum (strain MoPn / Nigg), this protein is ADP,ATP carrier protein 1 (tlcA).